Here is a 98-residue protein sequence, read N- to C-terminus: NADH-ubiquinone oxidoreductase chain 4L (98 aa).

3 consecutive transmembrane segments (helical) span residues 1–21, 30–50, and 61–81; these read MSPI…GLLI, LLCL…LALT, and IILL…LVMV.

Belongs to the complex I subunit 4L family. In terms of assembly, core subunit of respiratory chain NADH dehydrogenase (Complex I) which is composed of 45 different subunits.

The protein resides in the mitochondrion inner membrane. The enzyme catalyses a ubiquinone + NADH + 5 H(+)(in) = a ubiquinol + NAD(+) + 4 H(+)(out). Core subunit of the mitochondrial membrane respiratory chain NADH dehydrogenase (Complex I) which catalyzes electron transfer from NADH through the respiratory chain, using ubiquinone as an electron acceptor. Part of the enzyme membrane arm which is embedded in the lipid bilayer and involved in proton translocation. This chain is NADH-ubiquinone oxidoreductase chain 4L (MT-ND4L), found in Chrysochloris asiatica (Cape golden mole).